Here is a 279-residue protein sequence, read N- to C-terminus: Protein ABIL4 (279 aa).

Disordered stretches follow at residues 192-211 and 219-241; these read VHNN…PMRF and LLKR…EPQR. Residues 194–208 show a composition bias toward polar residues; the sequence is NNINNRTPNKRSNSP. Positions 219–228 are enriched in low complexity; the sequence is LLKRSSSPSQ.

This sequence belongs to the ABI family. In terms of assembly, binds SCAR.

It localises to the cytoplasm. Its subcellular location is the cytoskeleton. In terms of biological role, involved in regulation of actin and microtubule organization. Part of a WAVE complex that activates the Arp2/3 complex. The chain is Protein ABIL4 (ABIL4) from Arabidopsis thaliana (Mouse-ear cress).